We begin with the raw amino-acid sequence, 391 residues long: NADH-quinone oxidoreductase subunit D (391 aa).

It belongs to the complex I 49 kDa subunit family. NDH-1 is composed of 14 different subunits. Subunits NuoB, C, D, E, F, and G constitute the peripheral sector of the complex.

The protein resides in the cell inner membrane. It catalyses the reaction a quinone + NADH + 5 H(+)(in) = a quinol + NAD(+) + 4 H(+)(out). Its function is as follows. NDH-1 shuttles electrons from NADH, via FMN and iron-sulfur (Fe-S) centers, to quinones in the respiratory chain. The immediate electron acceptor for the enzyme in this species is believed to be ubiquinone. Couples the redox reaction to proton translocation (for every two electrons transferred, four hydrogen ions are translocated across the cytoplasmic membrane), and thus conserves the redox energy in a proton gradient. This Rickettsia rickettsii (strain Iowa) protein is NADH-quinone oxidoreductase subunit D.